Here is a 238-residue protein sequence, read N- to C-terminus: MAAAPLLLLLLLVPVPLLPLLAQGPGGALGNRHAVYWNSSNQHLRREGYTVQVNVNDYLDIYCPHYNSSGVGPGAGPGPGGGAEQYVLYMVSRNGYRTCNASQGFKRWECNRPHAPHSPIKFSEKFQRYSAFSLGYEFHAGHEYYYISTPTHNLHWKCLRMKVFVCCASTSHSGEKPVPTLPQFTMGPNVKINVLEDFEGENPQVPKLEKSISGTSPKREHLPLAVGIAFFLMTFLAS.

A signal peptide spans 1-22 (MAAAPLLLLLLLVPVPLLPLLA). One can recognise an Ephrin RBD domain in the interval 30–169 (GNRHAVYWNS…RMKVFVCCAS (140 aa)). N-linked (GlcNAc...) asparagine glycans are attached at residues asparagine 38, asparagine 67, and asparagine 100. Intrachain disulfides connect cysteine 63–cysteine 110 and cysteine 99–cysteine 158. Residue glycine 214 is the site of GPI-anchor amidated glycine attachment. Positions 215–238 (TSPKREHLPLAVGIAFFLMTFLAS) are cleaved as a propeptide — removed in mature form.

Belongs to the ephrin family. In terms of assembly, interacts with EPHA8; activates EPHA8. Expressed in brain, skeletal muscle, spleen, thymus, prostate, testis, ovary, small intestine, and peripheral blood leukocytes.

Its subcellular location is the cell membrane. Functionally, cell surface GPI-bound ligand for Eph receptors, a family of receptor tyrosine kinases which are crucial for migration, repulsion and adhesion during neuronal, vascular and epithelial development. Binds promiscuously Eph receptors residing on adjacent cells, leading to contact-dependent bidirectional signaling into neighboring cells. The signaling pathway downstream of the receptor is referred to as forward signaling while the signaling pathway downstream of the ephrin ligand is referred to as reverse signaling. In Homo sapiens (Human), this protein is Ephrin-A3 (EFNA3).